Consider the following 1807-residue polypeptide: Vitellogenin-2 (1807 aa).

The signal sequence occupies residues 1–16; sequence MWFPVTLLFLAGVAVA. The 796-residue stretch at 24 to 819 folds into the Vitellogenin domain; the sequence is WETGNEYQYS…LIPKYVYVGV (796 aa). Cysteines 180 and 224 form a disulfide. A disordered region spans residues 334-402; the sequence is SDSDNRRVRH…SSSSSSEEEN (69 aa). Positions 346-397 are enriched in low complexity; that stretch reads VSQNSEQENSSESSKSSSQSSSSSSSASSSSSSSSSSSSSSSSSSSSSSSSS. Residues Asn-354, Asn-579, Asn-635, Asn-1181, Asn-1304, Asn-1373, and Asn-1506 are each glycosylated (N-linked (GlcNAc...) asparagine). Residues 1448-1636 enclose the VWFD domain; it reads QSCTLDKDKV…TYAMTQENCQ (189 aa). 2 cysteine pairs are disulfide-bonded: Cys-1450–Cys-1599 and Cys-1472–Cys-1635. Disordered regions lie at residues 1635–1655 and 1684–1723; these read CQGP…HEFP and NRNK…KKHN. Asn-1693 carries an N-linked (GlcNAc...) asparagine glycan. The segment covering 1700–1714 has biased composition (polar residues); that stretch reads KKQYQANSQESGSSE.

Its subcellular location is the secreted. Precursor of the egg-yolk proteins that are sources of nutrients during embryonic development. In Solenopsis invicta (Red imported fire ant), this protein is Vitellogenin-2.